The sequence spans 75 residues: Small ribosomal subunit protein bS18 (75 aa).

The protein belongs to the bacterial ribosomal protein bS18 family. In terms of assembly, part of the 30S ribosomal subunit. Forms a tight heterodimer with protein bS6.

In terms of biological role, binds as a heterodimer with protein bS6 to the central domain of the 16S rRNA, where it helps stabilize the platform of the 30S subunit. This Desulforudis audaxviator (strain MP104C) protein is Small ribosomal subunit protein bS18.